Here is a 237-residue protein sequence, read N- to C-terminus: Small ribosomal subunit protein uS2 (237 aa).

It belongs to the universal ribosomal protein uS2 family.

The protein is Small ribosomal subunit protein uS2 of Clostridioides difficile (strain 630) (Peptoclostridium difficile).